Consider the following 496-residue polypeptide: Angiopoietin-2 (496 aa).

The signal sequence occupies residues 1 to 18; the sequence is MWQIIFLTFGWDLVLASA. Residues Asn89, Asn119, Asn133, Asn151, Asn240, and Asn304 are each glycosylated (N-linked (GlcNAc...) asparagine). Residues 159-256 adopt a coiled-coil conformation; that stretch reads QLLQHSISTN…QQHDLMETVN (98 aa). The Fibrinogen C-terminal domain occupies 275–495; that stretch reads KEEQTTFRDC…ATTMMIRPAD (221 aa). Cys284 and Cys313 form a disulfide bridge. 4 residues coordinate Ca(2+): Asp429, Asp431, Cys433, and Cys435. Cystine bridges form between Cys433–Cys435 and Cys437–Cys450.

As to quaternary structure, interacts with TEK/TIE2, competing for the same binding site as ANGPT1. Interacts with ITGA5. Interacts with SVEP1/polydom. Interacts with THBD; this interaction significantly inhibits the generation of activated PC and TAFIa/CPB2 by the thrombin/thrombomodulin complex. Expressed in the ovary, uterus and placenta.

Its subcellular location is the secreted. Its function is as follows. Binds to TEK/TIE2, competing for the ANGPT1 binding site, and modulating ANGPT1 signaling. Can induce tyrosine phosphorylation of TEK/TIE2 in the absence of ANGPT1. In the absence of angiogenic inducers, such as VEGF, ANGPT2-mediated loosening of cell-matrix contacts may induce endothelial cell apoptosis with consequent vascular regression. In concert with VEGF, it may facilitate endothelial cell migration and proliferation, thus serving as a permissive angiogenic signal. Involved in the regulation of lymphangiogenesis. This is Angiopoietin-2 (Angpt2) from Mus musculus (Mouse).